We begin with the raw amino-acid sequence, 260 residues long: Tropinone reductase homolog At1g07450 (260 aa).

14 to 38 (LVTGGSKGIGYAIVEELVGFGARVH) lines the NADP(+) pocket. A substrate-binding site is contributed by Ser-147. Tyr-159 acts as the Proton acceptor in catalysis.

This sequence belongs to the short-chain dehydrogenases/reductases (SDR) family. SDR65C subfamily.

In Arabidopsis thaliana (Mouse-ear cress), this protein is Tropinone reductase homolog At1g07450.